We begin with the raw amino-acid sequence, 439 residues long: Ribosomal protein uS12 methylthiotransferase RimO (439 aa).

Residues 5–115 form the MTTase N-terminal domain; that stretch reads PKIGFVSLGC…LIEAVHTHAP (111 aa). Residues Cys-14, Cys-50, Cys-79, Cys-146, Cys-150, and Cys-153 each contribute to the [4Fe-4S] cluster site. The region spanning 132 to 369 is the Radical SAM core domain; that stretch reads LTPRHYSYLK…MGLQAQISAD (238 aa). The 68-residue stretch at 372 to 439 folds into the TRAM domain; that stretch reads QRFVGTEQQV…ESTEYDLIAD (68 aa).

This sequence belongs to the methylthiotransferase family. RimO subfamily. The cofactor is [4Fe-4S] cluster.

It is found in the cytoplasm. The catalysed reaction is L-aspartate(89)-[ribosomal protein uS12]-hydrogen + (sulfur carrier)-SH + AH2 + 2 S-adenosyl-L-methionine = 3-methylsulfanyl-L-aspartate(89)-[ribosomal protein uS12]-hydrogen + (sulfur carrier)-H + 5'-deoxyadenosine + L-methionine + A + S-adenosyl-L-homocysteine + 2 H(+). Its function is as follows. Catalyzes the methylthiolation of an aspartic acid residue of ribosomal protein uS12. The sequence is that of Ribosomal protein uS12 methylthiotransferase RimO from Francisella philomiragia subsp. philomiragia (strain ATCC 25017 / CCUG 19701 / FSC 153 / O#319-036).